We begin with the raw amino-acid sequence, 154 residues long: UPF0178 protein GM21_2006 (154 aa).

This sequence belongs to the UPF0178 family.

The polypeptide is UPF0178 protein GM21_2006 (Geobacter sp. (strain M21)).